We begin with the raw amino-acid sequence, 109 residues long: Immunity protein CdiI (109 aa).

As to quaternary structure, specifically interacts with cognate toxin CdiA, which inhibits the toxin.

In terms of biological role, immunity protein component of a toxin-immunity protein module, which functions as a cellular contact-dependent growth inhibition (CDI) system. CDI modules allow bacteria to communicate with and inhibit the growth of closely related neighboring bacteria in a contact-dependent fashion. Neutralizes the toxic activity of cognate toxin CdiA (C-terminal 160 residue CT fragment) upon expression in E.coli. Does not inhibit toxic activity of CdiA from other strains of B.pseudomallei. The polypeptide is Immunity protein CdiI (cdiI) (Burkholderia pseudomallei (Pseudomonas pseudomallei)).